The primary structure comprises 274 residues: MQFSKMHGLGNDFMVVDAVTQNVYFSPELICRLADRHTGVGFDQLLIVEAPYDPDMDFHYRIFNADGSEVAQCGNGARCFARFVRLKGLINKRDIKVSTQSGRMVLSITNDDQVCVNMGEPEFEPHHVPFRALRAEKTYILRVAERTVLCGVVSMGNPHCVIQVPDVETAEVDILGPALESHERFPERANIGFMQILNRGHIRLRVYERGVGETQACGSGACAAVAVGIQQQLLDNHVRVDLPGGSLFICWDGPGKPLYMTGPAMHVYDGTIHL.

Substrate contacts are provided by asparagine 11, glutamine 44, and asparagine 64. The active-site Proton donor is cysteine 73. Substrate contacts are provided by residues 74–75 (GN), asparagine 157, asparagine 190, and 208–209 (ER). Cysteine 217 serves as the catalytic Proton acceptor. A substrate-binding site is contributed by 218–219 (GS).

Belongs to the diaminopimelate epimerase family. As to quaternary structure, homodimer.

It localises to the cytoplasm. It catalyses the reaction (2S,6S)-2,6-diaminopimelate = meso-2,6-diaminopimelate. It functions in the pathway amino-acid biosynthesis; L-lysine biosynthesis via DAP pathway; DL-2,6-diaminopimelate from LL-2,6-diaminopimelate: step 1/1. Its function is as follows. Catalyzes the stereoinversion of LL-2,6-diaminopimelate (L,L-DAP) to meso-diaminopimelate (meso-DAP), a precursor of L-lysine and an essential component of the bacterial peptidoglycan. The sequence is that of Diaminopimelate epimerase from Photorhabdus laumondii subsp. laumondii (strain DSM 15139 / CIP 105565 / TT01) (Photorhabdus luminescens subsp. laumondii).